Consider the following 29-residue polypeptide: Trypsin inhibitor 3 (29 aa).

3 disulfides stabilise this stretch: cysteine 3–cysteine 20, cysteine 10–cysteine 22, and cysteine 16–cysteine 28.

The protein belongs to the protease inhibitor I7 (squash-type serine protease inhibitor) family.

It is found in the secreted. In terms of biological role, inhibits trypsin. The chain is Trypsin inhibitor 3 from Luffa aegyptiaca (Sponge gourd).